A 585-amino-acid chain; its full sequence is Squalene epoxidase 2, mitochondrial (585 aa).

The N-terminal 45 residues, 1 to 45, are a transit peptide targeting the mitochondrion; that stretch reads MKPFVIRNLPRFQSTLRSSLLYTNHRPSSRFSLSTRRFTTGATYI. A helical transmembrane segment spans residues 70-90; the sequence is AKIALDQFIASLFTFLLLYIL. FAD-binding positions include 132-133, 152-153, arginine 160, arginine 231, valine 247, aspartate 409, and methionine 422; these read VA and ER. A run of 3 helical transmembrane segments spans residues 493–513, 520–540, and 545–565; these read FDYLSLGGVFSSGPVALLSGL, LVLHFFAVAIYAVCRLMLPFP, and FWLGARIISSASSIIFPIIKA.

Belongs to the squalene monooxygenase family. It depends on FAD as a cofactor. Expressed mainly in inflorescences. Detected in seedlings, leaves, stems, and siliques.

The protein localises to the mitochondrion membrane. The enzyme catalyses squalene + reduced [NADPH--hemoprotein reductase] + O2 = (S)-2,3-epoxysqualene + oxidized [NADPH--hemoprotein reductase] + H2O + H(+). The protein operates within terpene metabolism; lanosterol biosynthesis; lanosterol from farnesyl diphosphate: step 2/3. Its function is as follows. Catalyzes the stereospecific oxidation of squalene to (S)-2,3-epoxysqualene, and is considered to be a rate-limiting enzyme in steroid biosynthesis. Produces primarily oxidosqualene. This chain is Squalene epoxidase 2, mitochondrial (SQE2), found in Arabidopsis thaliana (Mouse-ear cress).